The following is a 141-amino-acid chain: Large ribosomal subunit protein uL11 (141 aa).

The protein belongs to the universal ribosomal protein uL11 family. In terms of assembly, part of the ribosomal stalk of the 50S ribosomal subunit. Interacts with L10 and the large rRNA to form the base of the stalk. L10 forms an elongated spine to which L12 dimers bind in a sequential fashion forming a multimeric L10(L12)X complex. One or more lysine residues are methylated.

Functionally, forms part of the ribosomal stalk which helps the ribosome interact with GTP-bound translation factors. This is Large ribosomal subunit protein uL11 from Ruegeria sp. (strain TM1040) (Silicibacter sp.).